The following is a 688-amino-acid chain: MDAYEATKVVFSRIQALDPDHAAKIMGLLLIQDHGDKEMIRLAFGPEALLHSVMAQARKELALLPPPPPPSSSSPTVPAAHSPFLLSRQNSGRGPAPSPSPLSASSPSSWAQAQPFSRSNGSVDEVVGAGEELISPANSGGGAAANAPPFFPRGGDVLLDDFQLQEQLAFLNEGGVNPSHPLQGFDGAECRSPGPGEGGGMFPYGLGWANGGPGHRRSASVNELCLGGGSSDGFGWKPCLYYARGFCKNGSSCRFVHGDDAAALTGAAMDAATAEQQQCQDFLLRSKSQRLGPAAFPYSPTGSLPGSPSAATKCLSLLLQQQHNDNQRAAAAAALMLGGSDEAHKFMGRPRLDRVDFASMMNPGSRQIYLTFPADSTFREEDVSNYFSIYGPVHDVRIPYQQKRMFGFVTFVYPETVKLILAKGNPHFICDARVLVKPYKEKGKVPDKYRKHQGDFSGCTTPTGLDGRDPFDLHQLGARMLQHSNSTNEMMLRRKLEEQQQAAELQQAIELHSRRLMDLQLLDLKNRAAAAVTTAMAMTIPTANAFGSSQPLATTMVESPPDSGEQLKGTGYFTEERKMVNGGGDKEESAGEASLNADSDQSLEHNLPDSPFASPTKSSVSAHQSFTTTDTGVVATSSCSASHVGISAGTNAGGGINHLRPSTLDIPSPRDFFSVSSRLASDHGAIGM.

The segment at 62–123 (ALLPPPPPPS…QPFSRSNGSV (62 aa)) is disordered. Over residues 101-117 (PLSASSPSSWAQAQPFS) the composition is skewed to low complexity. The C3H1-type zinc-finger motif lies at 233–260 (GFGWKPCLYYARGFCKNGSSCRFVHGDD). The RRM domain maps to 366–442 (RQIYLTFPAD…RVLVKPYKEK (77 aa)). Positions 487 to 522 (TNEMMLRRKLEEQQQAAELQQAIELHSRRLMDLQLL) form a coiled coil. Positions 552 to 624 (LATTMVESPP…PTKSSVSAHQ (73 aa)) are disordered. Positions 574–589 (TEERKMVNGGGDKEES) are enriched in basic and acidic residues. The segment covering 613 to 624 (ASPTKSSVSAHQ) has biased composition (polar residues).

In Oryza sativa subsp. japonica (Rice), this protein is Zinc finger CCCH domain-containing protein 22.